A 57-amino-acid polypeptide reads, in one-letter code: uncharacterized protein (57 aa).

The chain crosses the membrane as a helical span at residues 15-37 (GLAGLICIGLTISSGFSGSSILI).

Its subcellular location is the membrane. This is an uncharacterized protein from Dictyostelium discoideum (Social amoeba).